The sequence spans 154 residues: uncharacterized protein (154 aa).

Positions 1 to 19 are cleaved as a signal peptide; that stretch reads MWSLKSTLCIALLVTYSVA. ShKT domains lie at 67-102 and 113-150; these read CADDPNTDCTQYTSLCSNAKYTPLLQQFCPKTCGFC and CVDSSTNCANWEKNGFCSSTFYDCANKKQYCAKTCKLC. 6 cysteine pairs are disulfide-bonded: Cys67/Cys102, Cys75/Cys95, Cys82/Cys99, Cys113/Cys150, Cys120/Cys143, and Cys129/Cys147.

This is an uncharacterized protein from Caenorhabditis elegans.